The following is a 314-amino-acid chain: Olfactory receptor 5P6 (314 aa).

The Extracellular segment spans residues 1-28 (MAFQEDGNHTAVTEFVLFGLTDDPVLRV). N-linked (GlcNAc...) asparagine glycosylation occurs at N8. Residues 29–49 (ILFIIFLCIYLVTVSGNLSTI) traverse the membrane as a helical segment. Topologically, residues 50–57 (LLIRVSSQ) are cytoplasmic. Residues 58–78 (LHHPMYFFLSHLAFADIGYSS) traverse the membrane as a helical segment. Residues 79 to 102 (SVTPNMLVNFLVERHTISYIGCAI) lie on the Extracellular side of the membrane. C100 and C192 are joined by a disulfide. A helical transmembrane segment spans residues 103 to 123 (QLGSVVFFGSSECFILAAMAY). Residues 124 to 136 (DRFMAICNPLLYS) lie on the Cytoplasmic side of the membrane. Residues 137–157 (TKMSTQVCVQLLLIAYIGGFL) traverse the membrane as a helical segment. At 158–199 (NTWSFTICFYSLVFCGPNGVNHFFCDFAPLIELSCSDVSVPA) the chain is on the extracellular side. A helical membrane pass occupies residues 200–220 (TVPSFTAGSIIVVTVIVIAIS). Over 221–240 (YIYILITILKMHSTEGRQKA) the chain is Cytoplasmic. Residues 241 to 261 (FSTCTSHLTAVTLFYGTITFI) form a helical membrane-spanning segment. The Extracellular segment spans residues 262-274 (YVMPKSSFSTDQN). The helical transmembrane segment at 275 to 295 (KVVSVFYMVVIPMLNPLIYSL) threads the bilayer. Residues 296–314 (RNNEIKGALKRQIGRKIFS) are Cytoplasmic-facing.

Belongs to the G-protein coupled receptor 1 family.

It is found in the cell membrane. Functionally, potential odorant receptor. The polypeptide is Olfactory receptor 5P6 (Mus musculus (Mouse)).